We begin with the raw amino-acid sequence, 98 residues long: Co-chaperonin GroES (98 aa).

This sequence belongs to the GroES chaperonin family. Heptamer of 7 subunits arranged in a ring. Interacts with the chaperonin GroEL.

The protein localises to the cytoplasm. Together with the chaperonin GroEL, plays an essential role in assisting protein folding. The GroEL-GroES system forms a nano-cage that allows encapsulation of the non-native substrate proteins and provides a physical environment optimized to promote and accelerate protein folding. GroES binds to the apical surface of the GroEL ring, thereby capping the opening of the GroEL channel. The sequence is that of Co-chaperonin GroES from Brucella abortus (strain S19).